The sequence spans 182 residues: Probable RNA 2'-phosphotransferase (182 aa).

This sequence belongs to the KptA/TPT1 family.

Removes the 2'-phosphate from RNA via an intermediate in which the phosphate is ADP-ribosylated by NAD followed by a presumed transesterification to release the RNA and generate ADP-ribose 1''-2''-cyclic phosphate (APPR&gt;P). May function as an ADP-ribosylase. This is Probable RNA 2'-phosphotransferase from Acetivibrio thermocellus (strain ATCC 27405 / DSM 1237 / JCM 9322 / NBRC 103400 / NCIMB 10682 / NRRL B-4536 / VPI 7372) (Clostridium thermocellum).